Reading from the N-terminus, the 383-residue chain is Mating-type protein MAT-1 (383 aa).

The segment at residues 60–117 (KARKALNAFVGFRCYYVTIPMFKSWPMKKLSNLIGLLWEADPNKSLWSLMAKAWSTIR) is a DNA-binding region (alpha box).

Belongs to the MATALPHA1 family.

Its subcellular location is the nucleus. Functionally, mating type proteins are sequence specific DNA-binding proteins that act as master switches in fungal differentiation by controlling gene expression in a cell type-specific fashion. Transcriptional activator that induces the transcription of alpha-specific genes. This chain is Mating-type protein MAT-1 (MAT1), found in Cochliobolus heterostrophus (Southern corn leaf blight fungus).